Reading from the N-terminus, the 837-residue chain is CoA-transferase/lyase DddD (837 aa).

Residue Asp-602 is the Nucleophile of the active site.

The protein belongs to the CoA-transferase III family.

Its function is as follows. Dimethyl sulfide (DMS)-producing enzyme. Acts both as a transferase and a lyase: uses acetyl-coenzyme A (acetyl-coA) and dimethylsulfoniopropionate (DMSP) as substrates to produce DMS, acetate and 3-hydroxypropionate-CoA (3HP-CoA). Mediates the CoA-transferase prior to lyase activity. DMS is the principal form by which sulfur is transported from oceans to the atmosphere and is a key component of the ocean sulfur cycle. This is CoA-transferase/lyase DddD from Marinomonas sp. (strain MWYL1).